A 156-amino-acid chain; its full sequence is Small ribosomal subunit protein uS7 (156 aa).

Belongs to the universal ribosomal protein uS7 family. As to quaternary structure, part of the 30S ribosomal subunit. Contacts proteins S9 and S11.

Its function is as follows. One of the primary rRNA binding proteins, it binds directly to 16S rRNA where it nucleates assembly of the head domain of the 30S subunit. Is located at the subunit interface close to the decoding center, probably blocks exit of the E-site tRNA. The polypeptide is Small ribosomal subunit protein uS7 (Chelativorans sp. (strain BNC1)).